Consider the following 52-residue polypeptide: UPF0391 membrane protein XCV0245 (52 aa).

A run of 2 helical transmembrane segments spans residues 5-25 (AIIF…GIAG) and 27-47 (ATNI…ISMF).

This sequence belongs to the UPF0391 family.

Its subcellular location is the cell membrane. The polypeptide is UPF0391 membrane protein XCV0245 (Xanthomonas euvesicatoria pv. vesicatoria (strain 85-10) (Xanthomonas campestris pv. vesicatoria)).